The primary structure comprises 124 residues: Small ribosomal subunit protein uS12 (124 aa).

Asp-90 carries the 3-methylthioaspartic acid modification.

This sequence belongs to the universal ribosomal protein uS12 family. In terms of assembly, part of the 30S ribosomal subunit. Contacts proteins S8 and S17. May interact with IF1 in the 30S initiation complex.

Functionally, with S4 and S5 plays an important role in translational accuracy. Interacts with and stabilizes bases of the 16S rRNA that are involved in tRNA selection in the A site and with the mRNA backbone. Located at the interface of the 30S and 50S subunits, it traverses the body of the 30S subunit contacting proteins on the other side and probably holding the rRNA structure together. The combined cluster of proteins S8, S12 and S17 appears to hold together the shoulder and platform of the 30S subunit. The polypeptide is Small ribosomal subunit protein uS12 (Wolbachia sp. subsp. Drosophila simulans (strain wRi)).